The chain runs to 2150 residues: Zinc finger protein sdc-3 (2150 aa).

The interval 443 to 987 (QEITSPMFAL…DQVENEEPER (545 aa)) is dosage compensation domain 1. Disordered regions lie at residues 874 to 894 (EKEW…EEED), 1261 to 1373 (GSVV…GPEV), 1411 to 1448 (FETS…GPIN), and 1491 to 1670 (EVLQ…SEKL). Residues 1267–1293 (TNQQEENVTSEGPTLQEGSSIPSSSHI) are compositionally biased toward polar residues. The span at 1321–1333 (KKSGKTTRGRPKK) shows a compositional bias: basic residues. Over residues 1347 to 1357 (GQKEEAAHEPE) the composition is skewed to basic and acidic residues. Residues 1504-1524 (SSKKRGRRRKKTPPHIAKARK) show a composition bias toward basic residues. Residues 1508 to 1516 (RGRRRKKTP) are sex determination domain. Positions 1585 to 1598 (EDLHETERPGHVGE) are enriched in basic and acidic residues. The segment covering 1638–1648 (IQSQAGTNASP) has biased composition (polar residues). 2 C2H2-type zinc fingers span residues 2078-2105 (HKCV…GKLH) and 2117-2141 (DDCQ…NHHH). A dosage compensation domain 2 region spans residues 2080–2105 (CVQCSIRNQSVYFSSYSLLELHGKLH).

As to quaternary structure, component of the SDC complex, which consists of sdc-1, sdc-2 and sdc-3. Within the complex, interacts with sdc-1 and sdc-2. Interacts with dpy-21. In terms of processing, sumoylated. Sumoylation is important for assembly of the dosage compensation complex and its robust binding to the X chromosome. Expressed in somatic and in germline tissues in hermaphrodites (XX). In males (XO), only present in embryos younger than the 100-cell stage (at protein level).

It localises to the chromosome. It is found in the nucleus. In terms of biological role, component of the SDC complex that functions in sex determination and in X chromosome dosage compensation specifically in hermaphrodite (XX) animals. Plays a central role in the recruitment of the condensin I-like dosage compensation complex to the male sex-determining autosomal gene her-1, thereby contributing to its repression and initiating hermaphrodite sexual development. Involved in the recruitment and assembly of the dosage compensation complex and the dosage compensation protein dpy-21 onto the X chromosomes in hermaphrodites, which leads to a reduction of X-linked gene transcription and an equalization of X-linked gene expression between the sexes. The polypeptide is Zinc finger protein sdc-3 (sdc-3) (Caenorhabditis elegans).